The primary structure comprises 719 residues: Aminodeoxychorismate synthase (719 aa).

In terms of domain architecture, Glutamine amidotransferase type-1 spans 5–199; that stretch reads RTLLIDNYDS…RDLSLRAAGH (195 aa). Cysteine 86 functions as the Nucleophile in the catalytic mechanism. Active-site residues include histidine 173 and glutamate 175. The interval 199–224 is disordered; it reads HRPPHTERIPAPAPAPAPAPAPAPPA. Over residues 209–224 the composition is skewed to pro residues; that stretch reads APAPAPAPAPAPAPPA.

In the C-terminal section; belongs to the anthranilate synthase component I family.

It catalyses the reaction chorismate + L-glutamine = 4-amino-4-deoxychorismate + L-glutamate. The protein operates within antibiotic biosynthesis. Functionally, involved in pristinamycin I biosynthesis. Catalyzes the biosynthesis of 4-amino-4-deoxychorismate (ADC) from chorismate and glutamine. The chain is Aminodeoxychorismate synthase from Streptomyces pristinaespiralis.